The following is a 181-amino-acid chain: MMTPENDEEQTSVFSATVYGDKIQGKNKRKRVIGLCIRISMVISLLSMITMSAFLIVRLNQCMSANKAAITDSAVAVAAASSTHRKVVSSTTQYDHKESCNGLYYQGSCYILHSDYKSFEDAKANCAAESSTLPNKSDVLTTWLIDYVEDTWGSDGNPITKTTSDYQDSDVSQEVRKYFCT.

Topologically, residues 1 to 34 are intravirion; the sequence is MMTPENDEEQTSVFSATVYGDKIQGKNKRKRVIG. The chain crosses the membrane as a helical span at residues 35–57; it reads LCIRISMVISLLSMITMSAFLIV. Over 58–181 the chain is Virion surface; the sequence is RLNQCMSANK…SQEVRKYFCT (124 aa). Asparagine 135 carries an N-linked (GlcNAc...) asparagine; by host glycan.

Belongs to the orthopoxvirus OPG161 family. Homodimer, disulfide-linked. Interacts with protein OPG190. Interacts (via C-terminus) with protein OPG164. Interacts with OPG162.

The protein resides in the virion membrane. It localises to the host membrane. Functionally, forms a complex with OPG162 and OPG190 to coordinate the incorporation of OPG164 into wrapped enveloped virion (EV) membranes and, subsequently, the production of actin tails. Therefore plays an essential role in efficient cell-to-cell spread of viral particles. This chain is Protein OPG161 (OPG161), found in Monkeypox virus.